A 779-amino-acid chain; its full sequence is Probable ATP-dependent RNA helicase DHX40 (779 aa).

Positions 1-28 (MSRFPAVAGRAPRRQEEGERSRDLQEER) are disordered. A compositionally biased stretch (basic and acidic residues) spans 13 to 28 (RRQEEGERSRDLQEER). The Helicase ATP-binding domain occupies 63–231 (IQAVRDNSFL…FGNCPIFDIP (169 aa)). 76–83 (GNTGSGKT) serves as a coordination point for ATP. The DEAH box motif lies at 173–176 (DEAH). Residues 263–442 (TMDIHLNEMA…SVVLTLKCLA (180 aa)) form the Helicase C-terminal domain. The disordered stretch occupies residues 737 to 779 (SKDVLKKMQRRNDDKSISDARARFLERKQQRTQDHSDTRKETG).

The protein belongs to the DEAD box helicase family. DEAH subfamily. As to expression, ubiquitously expressed.

It carries out the reaction ATP + H2O = ADP + phosphate + H(+). Probable ATP-dependent RNA helicase. In Homo sapiens (Human), this protein is Probable ATP-dependent RNA helicase DHX40 (DHX40).